The sequence spans 240 residues: TATA-box-binding protein (240 aa).

Residues 21-61 are disordered; it reads NTRQVWENQNRDGTKPATTFQSEEDIKRAAPESEKDTSATS. Basic and acidic residues predominate over residues 44–57; that stretch reads EDIKRAAPESEKDT. 2 tandem repeats follow at residues 67 to 143 and 157 to 234.

Belongs to the TBP family. As to quaternary structure, binds DNA as monomer. The 1.2 MDa TFIID complex is composed of TATA binding protein (TBP) and the 14 TBP-associated factors. One copy of each TAF1, TAF2, TAF3, TAF7, TAF8, TAF11, TAF13, two copies of each TAF4, TAF5, TAF6, TAF9, TAF10, TAF12, and three copies of TAF14. Interacts with TFC8.

It is found in the nucleus. Functionally, general transcription factor that functions at the core of the DNA-binding general transcription factor complex TFIID. Binding of TFIID to a promoter (with or without TATA element) is the initial step in preinitiation complex (PIC) formation. TFIID plays a key role in the regulation of gene expression by RNA polymerase II through different activities such as transcription activator interaction, core promoter recognition and selectivity, TFIIA and TFIIB interaction, chromatin modification (histone acetylation by TAF1), facilitation of DNA opening and initiation of transcription. This is TATA-box-binding protein (SPT15) from Saccharomyces cerevisiae (strain ATCC 204508 / S288c) (Baker's yeast).